We begin with the raw amino-acid sequence, 107 residues long: MKSPIIYVCAALAEIAGCFAFWGWLRLGKPVWWLLPGMLSLAAFAYLLTLVESQAAGRAYASYGGIYIVASLVWLWSVENVRPDRWDVTGGCVCLIGAAIILWGPRG.

4 consecutive transmembrane segments (helical) span residues 5–25 (IIYV…WGWL), 31–51 (VWWL…LTLV), 59–79 (AYAS…WSVE), and 85–105 (RWDV…LWGP).

The protein belongs to the UPF0060 family.

Its subcellular location is the cell inner membrane. The polypeptide is UPF0060 membrane protein RPD_3084 (Rhodopseudomonas palustris (strain BisB5)).